Consider the following 102-residue polypeptide: Small ribosomal subunit protein uS10 (102 aa).

This sequence belongs to the universal ribosomal protein uS10 family. In terms of assembly, part of the 30S ribosomal subunit.

Its function is as follows. Involved in the binding of tRNA to the ribosomes. This chain is Small ribosomal subunit protein uS10, found in Tropheryma whipplei (strain TW08/27) (Whipple's bacillus).